Consider the following 466-residue polypeptide: MIPVTSFAGQSVAVFGLGGSGLASCHALRAGGAEVIACDDNLDRMVEAAQANFITADLRNLPWMNFAALVLTPGVPLTHPTPHWSVLKAREAGVEVIGDVELFCRERRLHAPNAPFVAITGTNGKSTTTALIAHLMRQAGYDTQMGGNIGTAILSLEPPRAGRVHVIEMSSYQIDLTPSLDPSVGILLNVTEDHIDRHGTIEHYAAVKERLVAGVQDGGTAIIGVDDGFGRDAADRLERAGKRVVRISVKQPLASGITADRETIVQADGGASHEVAKLDGIGSLRGLHNAQNAAAAAAAALALGVGPDVLQNGLRSFPGLAHRMEQVGRQGTTLFVNDSKGTNADATAKALSSFGEIFWIAGGKPKTGGIDSLAEYFPRIRKAYLIGEAAQEFAATLEGRVPYEISVTLDNAVPAAARDAASSGLPEPVVLLSPACASFDQFRNFEIRGTKFRDLVTALDGVKPVA.

121 to 127 (GTNGKST) is a binding site for ATP.

Belongs to the MurCDEF family.

The protein localises to the cytoplasm. The catalysed reaction is UDP-N-acetyl-alpha-D-muramoyl-L-alanine + D-glutamate + ATP = UDP-N-acetyl-alpha-D-muramoyl-L-alanyl-D-glutamate + ADP + phosphate + H(+). It participates in cell wall biogenesis; peptidoglycan biosynthesis. Functionally, cell wall formation. Catalyzes the addition of glutamate to the nucleotide precursor UDP-N-acetylmuramoyl-L-alanine (UMA). The polypeptide is UDP-N-acetylmuramoylalanine--D-glutamate ligase (Rhodopseudomonas palustris (strain HaA2)).